The chain runs to 455 residues: MASSASLETMVPPACPRAGASPATSKTLAFSIERIMAKTSEPRAPFEPRPAALEADSSQSKKLLNLCSPLPCMIPLQPLGYEVPSKTLLSYSEFWKSSLRAGGGGGGGSGGGAPVCGASGLCKTNCGVCCKAELGLAPSALPAGRVIKPQVINQAVGLPASGSLYYFNYLDSTAYPPSELLGGHLFPSGLLNAQAPTSLAAHPKLFLLENAKLASLAADKFPHPASYPHKERLHAPLEQVLKENSALTAERGGVKSHSKLPGGSTDSKPKNFTCEVCGKVFNAHYNLTRHMPVHTGARPFVCKVCGKGFRQASTLCRHKIIHTQEKPHKCNQCGKAFNRSSTLNTHIRIHAGYKPFVCEFCGKGFHQKGNYKNHKLTHSGEKQYKCTICNKAFHQVYNLTFHMHTHNDKKPFTCATCGKGFCRNFDLKKHVRKLHDSVGPTATPSAKDLARTVQS.

Positions 1-22 are disordered; that stretch reads MASSASLETMVPPACPRAGASP. The Engrailed homology 1 repressor signature appears at 27–42; it reads TLAFSIERIMAKTSEP. 6 consecutive C2H2-type zinc fingers follow at residues 272-294, 300-322, 328-350, 356-378, 384-406, and 412-435; these read FTCE…MPVH, FVCK…KIIH, HKCN…IRIH, FVCE…KLTH, YKCT…MHTH, and FTCA…RKLH.

The protein belongs to the krueppel C2H2-type zinc-finger protein family. Highly expressed in neocortical layer V, moderately expressed in layer VI. Expressed in subcortically projecting neurons.

The protein resides in the nucleus. Its function is as follows. Transcription repressor. Required for the specification of corticospinal motor neurons and other subcerebral projection neurons. May play a role in layer and neuronal subtype-specific patterning of subcortical projections and axonal fasciculation. Controls the development of dendritic arborization and spines of large layer V pyramidal neurons. Plays a role in rostro-caudal patterning of the diencephalon and in prethalamic formation. The sequence is that of Fez family zinc finger protein 2 (Fezf2) from Mus musculus (Mouse).